The chain runs to 442 residues: 3-phosphoshikimate 1-carboxyvinyltransferase (442 aa).

Positions 27, 28, and 32 each coordinate 3-phosphoshikimate. Lys27 is a binding site for phosphoenolpyruvate. Positions 100 and 128 each coordinate phosphoenolpyruvate. Residues Ser174, Ser175, Gln176, Ser204, Asp321, and Lys348 each coordinate 3-phosphoshikimate. Gln176 contributes to the phosphoenolpyruvate binding site. Asp321 (proton acceptor) is an active-site residue. Phosphoenolpyruvate contacts are provided by Arg352, Arg394, and Lys424.

This sequence belongs to the EPSP synthase family. Monomer.

The protein resides in the cytoplasm. It catalyses the reaction 3-phosphoshikimate + phosphoenolpyruvate = 5-O-(1-carboxyvinyl)-3-phosphoshikimate + phosphate. It functions in the pathway metabolic intermediate biosynthesis; chorismate biosynthesis; chorismate from D-erythrose 4-phosphate and phosphoenolpyruvate: step 6/7. Its function is as follows. Catalyzes the transfer of the enolpyruvyl moiety of phosphoenolpyruvate (PEP) to the 5-hydroxyl of shikimate-3-phosphate (S3P) to produce enolpyruvyl shikimate-3-phosphate and inorganic phosphate. The sequence is that of 3-phosphoshikimate 1-carboxyvinyltransferase from Herminiimonas arsenicoxydans.